Reading from the N-terminus, the 92-residue chain is Small ribosomal subunit protein uS17 (92 aa).

This sequence belongs to the universal ribosomal protein uS17 family. In terms of assembly, part of the 30S ribosomal subunit.

Functionally, one of the primary rRNA binding proteins, it binds specifically to the 5'-end of 16S ribosomal RNA. In Wigglesworthia glossinidia brevipalpis, this protein is Small ribosomal subunit protein uS17.